We begin with the raw amino-acid sequence, 338 residues long: Tryptophan--tRNA ligase (338 aa).

ATP-binding positions include 11-13 (QPS) and 19-20 (GN). A 'HIGH' region motif is present at residues 12-20 (PSGELSIGN). Asp-135 is a binding site for L-tryptophan. ATP-binding positions include 147–149 (GSD), Val-189, and 198–202 (KMSKS). The 'KMSKS' region signature appears at 198–202 (KMSKS).

The protein belongs to the class-I aminoacyl-tRNA synthetase family. As to quaternary structure, homodimer.

Its subcellular location is the cytoplasm. It carries out the reaction tRNA(Trp) + L-tryptophan + ATP = L-tryptophyl-tRNA(Trp) + AMP + diphosphate + H(+). In terms of biological role, catalyzes the attachment of tryptophan to tRNA(Trp). This is Tryptophan--tRNA ligase from Aliivibrio fischeri (strain ATCC 700601 / ES114) (Vibrio fischeri).